Reading from the N-terminus, the 229-residue chain is Large ribosomal subunit protein uL3 (229 aa).

Q151 carries the post-translational modification N5-methylglutamine.

It belongs to the universal ribosomal protein uL3 family. In terms of assembly, part of the 50S ribosomal subunit. Forms a cluster with proteins L14 and L19. In terms of processing, methylated by PrmB.

In terms of biological role, one of the primary rRNA binding proteins, it binds directly near the 3'-end of the 23S rRNA, where it nucleates assembly of the 50S subunit. The chain is Large ribosomal subunit protein uL3 from Paramagnetospirillum magneticum (strain ATCC 700264 / AMB-1) (Magnetospirillum magneticum).